The primary structure comprises 577 residues: Isocitrate dehydrogenase kinase/phosphatase (577 aa).

ATP contacts are provided by residues A318–M324 and K339. Residue D374 is part of the active site.

It belongs to the AceK family.

The protein localises to the cytoplasm. The catalysed reaction is L-seryl-[isocitrate dehydrogenase] + ATP = O-phospho-L-seryl-[isocitrate dehydrogenase] + ADP + H(+). Its function is as follows. Bifunctional enzyme which can phosphorylate or dephosphorylate isocitrate dehydrogenase (IDH) on a specific serine residue. This is a regulatory mechanism which enables bacteria to bypass the Krebs cycle via the glyoxylate shunt in response to the source of carbon. When bacteria are grown on glucose, IDH is fully active and unphosphorylated, but when grown on acetate or ethanol, the activity of IDH declines drastically concomitant with its phosphorylation. This Pseudomonas aeruginosa (strain ATCC 15692 / DSM 22644 / CIP 104116 / JCM 14847 / LMG 12228 / 1C / PRS 101 / PAO1) protein is Isocitrate dehydrogenase kinase/phosphatase.